A 159-amino-acid chain; its full sequence is Lipoprotein LpqH (159 aa).

The first 21 residues, 1–21, serve as a signal peptide directing secretion; it reads MKRGLTVAVAGAAILVAGLSG. Cys-22 is lipidated: N-palmitoyl cysteine. Cys-22 carries S-diacylglycerol cysteine lipidation. The segment at 24 to 51 is disordered; it reads SNKSTTGSGETTTAAGTTASPGAASGPK. Low complexity predominate over residues 27 to 49; the sequence is STTGSGETTTAAGTTASPGAASG.

Belongs to the mycobacterial 19 kDa antigen family. Modified by Lgt on Cys-22 with an S-linked diacylglycerol with a mixture of C16, C18 and C19 fatty acids, signal peptide is removed by LspA, modifed by Lnt with an amide-linked mixture of C16 and C19 fatty acids.

The protein localises to the cell membrane. Functionally, might be involved in ligand transport. A host TLR2 agonist, modifies host gene expression in response to pathogen. This is Lipoprotein LpqH (lpqH) from Mycobacterium tuberculosis (strain CDC 1551 / Oshkosh).